The following is a 59-amino-acid chain: Large ribosomal subunit protein bL32c (59 aa).

The tract at residues 36–59 (KSRSFSGVSEHPKPKGFSRQQTNK) is disordered.

This sequence belongs to the bacterial ribosomal protein bL32 family.

The protein resides in the plastid. Its subcellular location is the chloroplast. The sequence is that of Large ribosomal subunit protein bL32c from Oryza nivara (Indian wild rice).